The chain runs to 156 residues: Ribonuclease H (156 aa).

In terms of domain architecture, RNase H type-1 spans 3–144; it reads ERKLIHIFTD…CDILARSAAE (142 aa). The Mg(2+) site is built by D12, E50, D72, and D136.

This sequence belongs to the RNase H family. As to quaternary structure, monomer. The cofactor is Mg(2+).

It localises to the cytoplasm. It catalyses the reaction Endonucleolytic cleavage to 5'-phosphomonoester.. Its function is as follows. Endonuclease that specifically degrades the RNA of RNA-DNA hybrids. The polypeptide is Ribonuclease H (Shewanella putrefaciens (strain CN-32 / ATCC BAA-453)).